A 227-amino-acid chain; its full sequence is Ribonuclease 3 (227 aa).

The region spanning 3–130 (TNAISKIIKY…LIGAIYLDGG (128 aa)) is the RNase III domain. Glutamate 43 lines the Mg(2+) pocket. Aspartate 47 is an active-site residue. Asparagine 116 and glutamate 119 together coordinate Mg(2+). Residue glutamate 119 is part of the active site. In terms of domain architecture, DRBM spans 155-224 (DAKTILQEWA…ASLMLAKINY (70 aa)).

The protein belongs to the ribonuclease III family. Homodimer. Mg(2+) serves as cofactor.

It is found in the cytoplasm. The enzyme catalyses Endonucleolytic cleavage to 5'-phosphomonoester.. Digests double-stranded RNA. Involved in the processing of primary rRNA transcript to yield the immediate precursors to the large and small rRNAs (23S and 16S). Processes some mRNAs, and tRNAs when they are encoded in the rRNA operon. Processes pre-crRNA and tracrRNA of type II CRISPR loci if present in the organism. This Ehrlichia ruminantium (strain Gardel) protein is Ribonuclease 3.